We begin with the raw amino-acid sequence, 401 residues long: MIGLIGIRKNTPLEIREKFIVKSKKYNEYFGELLKELNEVVILATCNRTEIYFNASLNEEELLKKIFDIFNWDYEYKKYVFITNNKDAYRHLFEVCSGFHSKILGEDQILGQVKDAYEEALEFKAVSLELHRLFQEAITCGKRFRKEAKLFEIPVSSSSIVVSEAIKRECTKFMVLGYGEVGQLVMKYLLSHKIQTVYLVVRNPKIKDEIQDERVKVITFEEKNKYINSIECIISCTSAPHPVVKTEDISESGSRLVIYDLSVPRDVEKEVALLSRTEVYNIDTISRIDDENKKLRKDKMEDNRHIMNKYLKEYDEWLKLRSISHVIKNLKTVGNDVYEKRVQTFSHKSKDKNDIALAHKLIKSTSDFYINRAIEVIKEETLKGCGEEWIGIIEKIFMTKE.

Substrate-binding positions include 45–48 (TCNR), serine 101, 106–108 (EDQ), and glutamine 112. Residue cysteine 46 is the Nucleophile of the active site. Residue 177–182 (GYGEVG) coordinates NADP(+).

The protein belongs to the glutamyl-tRNA reductase family. Homodimer.

The catalysed reaction is (S)-4-amino-5-oxopentanoate + tRNA(Glu) + NADP(+) = L-glutamyl-tRNA(Glu) + NADPH + H(+). It functions in the pathway porphyrin-containing compound metabolism; protoporphyrin-IX biosynthesis; 5-aminolevulinate from L-glutamyl-tRNA(Glu): step 1/2. In terms of biological role, catalyzes the NADPH-dependent reduction of glutamyl-tRNA(Glu) to glutamate 1-semialdehyde (GSA). This Clostridium beijerinckii (strain ATCC 51743 / NCIMB 8052) (Clostridium acetobutylicum) protein is Glutamyl-tRNA reductase.